The primary structure comprises 145 residues: D-aminoacyl-tRNA deacylase (145 aa).

A Gly-cisPro motif, important for rejection of L-amino acids motif is present at residues Gly137–Pro138.

This sequence belongs to the DTD family. In terms of assembly, homodimer.

The protein localises to the cytoplasm. It carries out the reaction glycyl-tRNA(Ala) + H2O = tRNA(Ala) + glycine + H(+). The catalysed reaction is a D-aminoacyl-tRNA + H2O = a tRNA + a D-alpha-amino acid + H(+). Functionally, an aminoacyl-tRNA editing enzyme that deacylates mischarged D-aminoacyl-tRNAs. Also deacylates mischarged glycyl-tRNA(Ala), protecting cells against glycine mischarging by AlaRS. Acts via tRNA-based rather than protein-based catalysis; rejects L-amino acids rather than detecting D-amino acids in the active site. By recycling D-aminoacyl-tRNA to D-amino acids and free tRNA molecules, this enzyme counteracts the toxicity associated with the formation of D-aminoacyl-tRNA entities in vivo and helps enforce protein L-homochirality. This chain is D-aminoacyl-tRNA deacylase, found in Photorhabdus laumondii subsp. laumondii (strain DSM 15139 / CIP 105565 / TT01) (Photorhabdus luminescens subsp. laumondii).